We begin with the raw amino-acid sequence, 455 residues long: Bifunctional protein GlmU (455 aa).

The interval 1 to 232 is pyrophosphorylase; the sequence is MASTTGALIL…DPNLLGVNNP (232 aa). Residues 10–13, Lys24, Gln75, and 80–81 contribute to the UDP-N-acetyl-alpha-D-glucosamine site; these read LAAG and GT. Asp106 serves as a coordination point for Mg(2+). Residues Gly141, Glu155, Asn172, and Asn230 each contribute to the UDP-N-acetyl-alpha-D-glucosamine site. Residue Asn230 coordinates Mg(2+). The segment at 233–253 is linker; sequence AELIRSEALLRTRLVIGHIEG. Positions 254 to 455 are N-acetyltransferase; that stretch reads GVLIHAPETV…QTNLPRKPKA (202 aa). The UDP-N-acetyl-alpha-D-glucosamine site is built by Arg336 and Lys354. Catalysis depends on His366, which acts as the Proton acceptor. UDP-N-acetyl-alpha-D-glucosamine contacts are provided by Tyr369 and Asn380. Acetyl-CoA is bound by residues Ala383, 389–390, Ser408, Ala426, and Arg443; that span reads NY.

The protein in the N-terminal section; belongs to the N-acetylglucosamine-1-phosphate uridyltransferase family. This sequence in the C-terminal section; belongs to the transferase hexapeptide repeat family. Homotrimer. Requires Mg(2+) as cofactor.

It is found in the cytoplasm. The catalysed reaction is alpha-D-glucosamine 1-phosphate + acetyl-CoA = N-acetyl-alpha-D-glucosamine 1-phosphate + CoA + H(+). It carries out the reaction N-acetyl-alpha-D-glucosamine 1-phosphate + UTP + H(+) = UDP-N-acetyl-alpha-D-glucosamine + diphosphate. Its pathway is nucleotide-sugar biosynthesis; UDP-N-acetyl-alpha-D-glucosamine biosynthesis; N-acetyl-alpha-D-glucosamine 1-phosphate from alpha-D-glucosamine 6-phosphate (route II): step 2/2. The protein operates within nucleotide-sugar biosynthesis; UDP-N-acetyl-alpha-D-glucosamine biosynthesis; UDP-N-acetyl-alpha-D-glucosamine from N-acetyl-alpha-D-glucosamine 1-phosphate: step 1/1. It participates in bacterial outer membrane biogenesis; LPS lipid A biosynthesis. Catalyzes the last two sequential reactions in the de novo biosynthetic pathway for UDP-N-acetylglucosamine (UDP-GlcNAc). The C-terminal domain catalyzes the transfer of acetyl group from acetyl coenzyme A to glucosamine-1-phosphate (GlcN-1-P) to produce N-acetylglucosamine-1-phosphate (GlcNAc-1-P), which is converted into UDP-GlcNAc by the transfer of uridine 5-monophosphate (from uridine 5-triphosphate), a reaction catalyzed by the N-terminal domain. In Nitratidesulfovibrio vulgaris (strain DP4) (Desulfovibrio vulgaris), this protein is Bifunctional protein GlmU.